The sequence spans 269 residues: MATH domain and coiled-coil domain-containing protein At2g01790 (269 aa).

The MATH domain maps to 6–134; the sequence is AVKKLWVINN…NGEVDIVAEV (129 aa). Positions 228 to 269 form a coiled coil; sequence KLDWLEKKLKETGKSRLQEIEEDLKDLKVKCADMDALLEFLR.

The polypeptide is MATH domain and coiled-coil domain-containing protein At2g01790 (Arabidopsis thaliana (Mouse-ear cress)).